The following is a 519-amino-acid chain: PTS system mannitol-specific EIICB component (519 aa).

At Met1 to Asn30 the chain is on the cytoplasmic side. The 333-residue stretch at Phe19–Asp351 folds into the PTS EIIC type-2 domain. The chain crosses the membrane as a helical span at residues Ile31–Asn52. The Extracellular portion of the chain corresponds to Lys53–Ser56. The helical transmembrane segment at Gln57–Arg77 threads the bilayer. The Cytoplasmic segment spans residues Leu78–Phe141. A helical membrane pass occupies residues Ser142–Gln163. The Extracellular portion of the chain corresponds to Phe164 to Ala172. A helical membrane pass occupies residues Val173–Lys193. Residues Ile194–Ala280 are Cytoplasmic-facing. A helical membrane pass occupies residues Val281–Lys300. The Extracellular segment spans residues Ser301–Phe320. The chain crosses the membrane as a helical span at residues Leu321–Met342. The Cytoplasmic portion of the chain corresponds to Lys343–Ala519. The tract at residues Lys366–Asp406 is disordered. Residues Ser367 to Ala387 show a composition bias toward low complexity. Positions Asp394–Asp406 are enriched in acidic residues. Residues Asp425–Ala519 form the PTS EIIB type-2 domain. Catalysis depends on Cys431, which acts as the Phosphocysteine intermediate; for EIIB activity. Phosphocysteine; by EIIA is present on Cys431.

As to quaternary structure, homodimer.

It localises to the cell membrane. The enzyme catalyses D-mannitol(out) + N(pros)-phospho-L-histidyl-[protein] = D-mannitol 1-phosphate(in) + L-histidyl-[protein]. The phosphoenolpyruvate-dependent sugar phosphotransferase system (sugar PTS), a major carbohydrate active transport system, catalyzes the phosphorylation of incoming sugar substrates concomitantly with their translocation across the cell membrane. The enzyme II CmtAB PTS system is involved in D-mannitol transport. This Staphylococcus haemolyticus (strain JCSC1435) protein is PTS system mannitol-specific EIICB component (mtlA).